Here is a 150-residue protein sequence, read N- to C-terminus: Large ribosomal subunit protein bL9 (150 aa).

The protein belongs to the bacterial ribosomal protein bL9 family.

Functionally, binds to the 23S rRNA. In Shewanella loihica (strain ATCC BAA-1088 / PV-4), this protein is Large ribosomal subunit protein bL9.